The primary structure comprises 612 residues: Dihydroxy-acid dehydratase (612 aa).

Position 81 (Asp81) interacts with Mg(2+). Residue Cys122 participates in [2Fe-2S] cluster binding. Mg(2+)-binding residues include Asp123 and Lys124. Lys124 carries the N6-carboxylysine modification. Cys195 provides a ligand contact to [2Fe-2S] cluster. Glu491 lines the Mg(2+) pocket. Ser517 (proton acceptor) is an active-site residue.

This sequence belongs to the IlvD/Edd family. In terms of assembly, homodimer. It depends on [2Fe-2S] cluster as a cofactor. Requires Mg(2+) as cofactor.

The catalysed reaction is (2R)-2,3-dihydroxy-3-methylbutanoate = 3-methyl-2-oxobutanoate + H2O. It carries out the reaction (2R,3R)-2,3-dihydroxy-3-methylpentanoate = (S)-3-methyl-2-oxopentanoate + H2O. It participates in amino-acid biosynthesis; L-isoleucine biosynthesis; L-isoleucine from 2-oxobutanoate: step 3/4. The protein operates within amino-acid biosynthesis; L-valine biosynthesis; L-valine from pyruvate: step 3/4. Its function is as follows. Functions in the biosynthesis of branched-chain amino acids. Catalyzes the dehydration of (2R,3R)-2,3-dihydroxy-3-methylpentanoate (2,3-dihydroxy-3-methylvalerate) into 2-oxo-3-methylpentanoate (2-oxo-3-methylvalerate) and of (2R)-2,3-dihydroxy-3-methylbutanoate (2,3-dihydroxyisovalerate) into 2-oxo-3-methylbutanoate (2-oxoisovalerate), the penultimate precursor to L-isoleucine and L-valine, respectively. This Buchnera aphidicola subsp. Baizongia pistaciae (strain Bp) protein is Dihydroxy-acid dehydratase.